Consider the following 950-residue polypeptide: MAQVAVSTPPIAHEESSESRMVVTFLVSALESMCKELAKSKAEVACIAMYEADVFVIGTEKGRAFVNARTDLQKDFAKYCVAEGLQEVKPPGPANASRMQVDSGETEILRKAVEDYFCFCYGKALGTAAMVPVPYEKMLTDQEAIVVQGLPEGVPFQHPENYDLATLKWILENKAGISFLINRPFPGPANQPGGPGVVTDTDKSVTSPSESCTPIRVKTEPMEDSGISLKAEVVSVKKESEDPNYYEYSMQESRHSSAGTEVIETELPMEDSIQLVPSETSEDPEAEVKIEGNTSSPNITNSAAGVEDLNIVQVTVPDNEKERLSSLEKIKQLREQVNDLFSRKFGEAIGVDFPVKVPYRKITFNPGCVVIDGMPPGVVFKAPGYLEISSMRRILDAADLIKFTVIRPLPGLELSNVGKRKIDQEGRVFQEKWERAYFFVEVQNIPTCLICKQSMSVSKEYNLRRHYQTNHSKHYDQYTEKMRDEKLQELKEGLRKYLLGSSDTVCPEQKQVFAKVNPRENAAVQPVEDVAGNLWEKLREKIRSFVAYSIAIDEITDINNTTQLAIFIRGVDENFDVSEELLDTVPMTGTKSGNEIFLRVEKSLKKFNIDWSKLVSVASTGTPAMVDANDGLVTKLKSKVAMVCKGSDLKSVCCIIHPESLCAQKLKMDHIMSVVVNAVNWICSRGLNHSEFTTLLYELDCQYGSLLYYTEIKWLSRGLVLKRFFESLEEIDSFMSSRGKPLPQLSSQDWIKDLAFLVDMTMHLNTLNISLQGHSQIVTQMYDLIRAFLAKLCLWETHLARNNLAHFPTLKSVSRNESDGLNYIPKIVELKTEFQKRLSDFKLYESELTLFSSPFSMKIESVQEALQMEVIDLQCNTVLKTKYDKVGIPEFYKHLWGSYPKYKIHCAKILSMFGSTYICEQLFSIMKLSKTEYCSQLKDSQWDSVLHIST.

GTF2I-like repeat units lie at residues 100–194 (QVDS…QPGG) and 324–418 (LSSL…SNVG).

The protein belongs to the TFII-I family.

It is found in the nucleus. The chain is General transcription factor II-I repeat domain-containing protein 2 (GTF2IRD2) from Bos taurus (Bovine).